A 162-amino-acid chain; its full sequence is Endoribonuclease YbeY (162 aa).

The Zn(2+) site is built by His-130, His-134, and His-140.

This sequence belongs to the endoribonuclease YbeY family. Zn(2+) serves as cofactor.

The protein resides in the cytoplasm. Single strand-specific metallo-endoribonuclease involved in late-stage 70S ribosome quality control and in maturation of the 3' terminus of the 16S rRNA. This chain is Endoribonuclease YbeY, found in Nitratidesulfovibrio vulgaris (strain ATCC 29579 / DSM 644 / CCUG 34227 / NCIMB 8303 / VKM B-1760 / Hildenborough) (Desulfovibrio vulgaris).